A 583-amino-acid chain; its full sequence is Pentatricopeptide repeat-containing protein At3g59040 (583 aa).

PPR repeat units follow at residues 138 to 172 (SEID…GSTP), 173 to 207 (NVIS…GPEP), 208 to 242 (SAIT…KKSP), 246 to 280 (DQKM…GVPQ), 281 to 312 (STVT…DIQP), 313 to 347 (DVVS…GVRP), 348 to 382 (THKA…RIFP), 383 to 417 (DLWS…GFEP), 418 to 452 (NIVT…GIKA), and 453 to 487 (NQTI…GVPP). Residues 525-583 (VYGSDDDEEGVEDISSESSDDEDEGDDDDDDARETVLYDKPQEGSLGYGSLQTEELVGL) are disordered. Residues 528 to 556 (SDDDEEGVEDISSESSDDEDEGDDDDDDA) are compositionally biased toward acidic residues. The segment covering 557–566 (RETVLYDKPQ) has biased composition (basic and acidic residues).

It belongs to the PPR family. P subfamily.

This is Pentatricopeptide repeat-containing protein At3g59040 from Arabidopsis thaliana (Mouse-ear cress).